The primary structure comprises 1177 residues: Solute carrier family 9 member C1 (1177 aa).

The Extracellular portion of the chain corresponds to 1-17 (MAGIFKEFFFSTEDLPE). A helical membrane pass occupies residues 18 to 37 (VILTLSLISSIGAFLNRHLE). Residues 38–42 (DFPIP) lie on the Cytoplasmic side of the membrane. The chain crosses the membrane as a helical span at residues 43 to 60 (VPVILFLLGCSFEVLSFT). The Extracellular portion of the chain corresponds to 61–76 (SSQVQRYANAIQWMSP). The helical transmembrane segment at 77 to 93 (DLFFRIFTPVVFFTTAF) threads the bilayer. At 94–103 (DMDTYMLQKL) the chain is on the cytoplasmic side. Residues 104–129 (FWQILLISIPGFLVNYILVLWHLASV) form a helical membrane-spanning segment. Positions 104 to 191 (FWQILLISIP…SLITFTSIMD (88 aa)) are transport core domain. The Extracellular portion of the chain corresponds to 130–135 (NQLLLK). The chain crosses the membrane as a helical span at residues 136-161 (PTQWLLFSAILVSSDPMLTAAAIRDL). Residues 162–164 (GLS) are Cytoplasmic-facing. Residues 165–190 (RSLISLINGESLMTSVISLITFTSIM) form a helical membrane-spanning segment. The Extracellular segment spans residues 191–204 (DFDQRLQSKRNHTL). Residues 205 to 236 (AEEIVGGICSYIIASFLFGILSSKLIQFWMST) traverse the membrane as a helical segment. The Cytoplasmic segment spans residues 237–240 (VFGD). Residues 241–262 (DVNHISLIFSILYLIFYICELV) traverse the membrane as a helical segment. Residues 263-265 (GMS) lie on the Extracellular side of the membrane. A helical membrane pass occupies residues 266–279 (GIFTLAIVGLLLNS). Over 280 to 286 (TSFKAAI) the chain is Cytoplasmic. Residues 287–319 (EETLLLEFWTFLSRIAFLMVFTFFGLLIPAHTY) traverse the membrane as a helical segment. Over 320 to 324 (LYIEF) the chain is Extracellular. Residues 325 to 354 (VDIYYSLNIYLTLIVLRFLTLLLISPVLSR) form a helical membrane-spanning segment. The segment at 325–426 (VDIYYSLNIY…FILPVAVTIL (102 aa)) is transport core domain. The Cytoplasmic segment spans residues 355–360 (VGHEFS). A helical transmembrane segment spans residues 361 to 391 (WRWIFIMVCSEMKGMPNINMALLLAYSDLYF). Residues 392–395 (GSDK) lie on the Extracellular side of the membrane. A helical membrane pass occupies residues 396 to 426 (EKSQILFHGVLVCLITLVVNRFILPVAVTIL). Residues 427–612 (GLRDATSTKY…ICHTIVFTEE (186 aa)) are Cytoplasmic-facing. Residues 598 to 678 (YFFFRICHTI…DFFSHAWNIF (81 aa)) are ion transport-like. A helical membrane pass occupies residues 613-633 (FEHVGYLVILMNIFPFIISWI). The Extracellular segment spans residues 634-637 (SQLN). A helical membrane pass occupies residues 638–664 (VIYHSELKHTNYCFLTLYILEALLKIA). Residues 665-671 (AMRKDFF) lie on the Cytoplasmic side of the membrane. The helical transmembrane segment at 672–696 (SHAWNIFELAITLIGILHVILIEID) threads the bilayer. The Extracellular segment spans residues 697-704 (TIKYIFNE). A helical membrane pass occupies residues 705–731 (TEVIVFIKVVQFFRILRIFKLIAPKLL). Residues 732–1177 (QIIDKRMSHQ…RINLRKVRKE (446 aa)) are Cytoplasmic-facing.

Belongs to the monovalent cation:proton antiporter 1 (CPA1) transporter (TC 2.A.36) family. Interacts with soluble adenylyl cyclase (sAC). Sperm.

It localises to the cell projection. Its subcellular location is the cilium. The protein resides in the flagellum membrane. Functionally, sperm-specific solute carrier involved in intracellular pH regulation of spermatozoa. Required for sperm motility and fertility. Involved in sperm cell hyperactivation, a step needed for sperm motility which is essential late in the preparation of sperm for fertilization. Required for the expression and bicarbonate regulation of the soluble adenylyl cyclase (sAC). The polypeptide is Solute carrier family 9 member C1 (SLC9C1) (Homo sapiens (Human)).